Here is a 259-residue protein sequence, read N- to C-terminus: Tonin (259 aa).

The N-terminal stretch at 1 to 18 (MWLQILSLVLSVGRIDAA) is a signal peptide. Positions 19–24 (PPGQSR) are cleaved as a propeptide — activation peptide. One can recognise a Peptidase S1 domain in the interval 25 to 256 (IVGGYKCEKN…FTSWIKKVMK (232 aa)). Cystine bridges form between Cys31/Cys171, Cys48/Cys64, Cys150/Cys217, Cys182/Cys196, and Cys207/Cys232. The Charge relay system role is filled by His63. Residue His63 coordinates Zn(2+). The N-linked (GlcNAc...) asparagine glycan is linked to Asn106. Residues His113 and His115 each contribute to the Zn(2+) site. Asp118 acts as the Charge relay system in catalysis. An N-linked (GlcNAc...) asparagine glycan is attached at Asn189. The active-site Charge relay system is Ser211.

Belongs to the peptidase S1 family. Kallikrein subfamily. As to quaternary structure, monomer. Requires Zn(2+) as cofactor. As to expression, found in submaxillary gland.

It carries out the reaction Preferential cleavage of Arg-|-Xaa bonds in small molecule substrates. Highly selective action to release kallidin (lysyl-bradykinin) from kininogen involves hydrolysis of Met-|-Xaa or Leu-|-Xaa.. Its function is as follows. This protein has both trypsin- and chymotrypsin-like activities, being able to release angiotensin II from angiotensin I or angiotensinogen. The chain is Tonin (Klk2) from Rattus norvegicus (Rat).